The chain runs to 270 residues: tRNA pseudouridine synthase A (270 aa).

Catalysis depends on Asp51, which acts as the Nucleophile. Tyr109 contacts substrate.

It belongs to the tRNA pseudouridine synthase TruA family. As to quaternary structure, homodimer.

The enzyme catalyses uridine(38/39/40) in tRNA = pseudouridine(38/39/40) in tRNA. Functionally, formation of pseudouridine at positions 38, 39 and 40 in the anticodon stem and loop of transfer RNAs. This is tRNA pseudouridine synthase A from Burkholderia orbicola (strain MC0-3).